A 419-amino-acid chain; its full sequence is 1,4-beta-D-glucan cellobiohydrolase CEL6B (419 aa).

Positions 1–47 are cleaved as a signal peptide; the sequence is MGESFLLLQPASPALSPTPSSLLLGPTITMRADVLIAALATGALVAA. Substrate is bound by residues Trp-111 and Ser-113. Catalysis depends on proton donor residues Asp-152 and Asp-199. Substrate is bound at residue Trp-247. N-linked (GlcNAc...) asparagine glycosylation is present at Asn-284. Asn-287 is a binding site for substrate. N-linked (GlcNAc...) asparagine glycosylation is present at Asn-298. Residue Trp-347 participates in substrate binding. A glycan (N-linked (GlcNAc...) asparagine) is linked at Asn-364. 2 residues coordinate substrate: Lys-375 and Glu-379.

Belongs to the glycosyl hydrolase 6 (cellulase B) family. In terms of processing, both N- and O-glycosylated.

Its subcellular location is the secreted. It carries out the reaction Hydrolysis of (1-&gt;4)-beta-D-glucosidic linkages in cellulose and cellotetraose, releasing cellobiose from the non-reducing ends of the chains.. Its function is as follows. Exoglucanase that plays an important function in biomass degradation by catalyzing the hydrolysis of the non-reducing end beta-1,4-glucosidic linkages in cellulose and cellotetraose to release cellobiose. Hydrolyzes crystalline and amorphous cellulose but is inactive on hydroxyethyl cellulose, mannan, galactomannan, xyloglucan, arabinoxylan, arabinan, xylan, and pectin. This chain is 1,4-beta-D-glucan cellobiohydrolase CEL6B, found in Podospora anserina (strain S / ATCC MYA-4624 / DSM 980 / FGSC 10383) (Pleurage anserina).